The chain runs to 302 residues: Glycine--tRNA ligase alpha subunit (302 aa).

It belongs to the class-II aminoacyl-tRNA synthetase family. Tetramer of two alpha and two beta subunits.

The protein localises to the cytoplasm. It catalyses the reaction tRNA(Gly) + glycine + ATP = glycyl-tRNA(Gly) + AMP + diphosphate. The chain is Glycine--tRNA ligase alpha subunit from Wigglesworthia glossinidia brevipalpis.